Reading from the N-terminus, the 435-residue chain is Adenylosuccinate synthetase (435 aa).

GTP contacts are provided by residues 11–17 (GDEGKGK) and 39–41 (GHT). Asp12 acts as the Proton acceptor in catalysis. Mg(2+)-binding residues include Asp12 and Gly39. IMP-binding positions include 12–15 (DEGK), 37–40 (NAGH), Thr128, Arg142, Gln223, Thr238, and Arg302. His40 (proton donor) is an active-site residue. A substrate-binding site is contributed by 298-304 (SVTGRPR). GTP contacts are provided by residues Arg304, 330-332 (KLD), and 412-414 (STG).

The protein belongs to the adenylosuccinate synthetase family. As to quaternary structure, homodimer. The cofactor is Mg(2+).

It localises to the cytoplasm. It catalyses the reaction IMP + L-aspartate + GTP = N(6)-(1,2-dicarboxyethyl)-AMP + GDP + phosphate + 2 H(+). It participates in purine metabolism; AMP biosynthesis via de novo pathway; AMP from IMP: step 1/2. Plays an important role in the de novo pathway of purine nucleotide biosynthesis. Catalyzes the first committed step in the biosynthesis of AMP from IMP. The protein is Adenylosuccinate synthetase of Coxiella burnetii (strain Dugway 5J108-111).